The primary structure comprises 852 residues: Exported protein YdbA (852 aa).

The signal sequence occupies residues 1–21 (MQRKTLLSACIALALSGQGWA). 5 disordered regions span residues 30-50 (TTGEKKNTNVTCPADPGKLSP), 91-145 (DDDH…FNND), 307-354 (TITN…QDGD), 407-449 (TNGG…KVIQ), and 506-531 (NGGTGTQINGNDATANNSGKTTVDGK). A compositionally biased stretch (low complexity) spans 307-319 (TITNGGTGTQING). Residues 339 to 348 (GTEINGNNGK) are compositionally biased toward polar residues. Residues 506-516 (NGGTGTQINGN) are compositionally biased toward low complexity. Polar residues predominate over residues 517-526 (DATANNSGKT).

The protein localises to the secreted. Functionally, the full-length protein (which is about 2000 amino acids long) is part of the autotransporter family. This Escherichia coli (strain K12) protein is Exported protein YdbA (ydbA).